The primary structure comprises 237 residues: MTYTRVLLKLSGEALMGSQGYGIDPAIVQSIASDVAKVVANGTQLAIVVGGGNIFRGLKGSAAGMERATADYVGMLATVMNAITLQDGLERAGVPTRVQTAIAMQEVAEPYIRRKAIRHLEKNRVVVFGAGCGNPFFTTDTTAALRAAEINADVVFKATKVDGVYDKDPAKHADAVKHPQLSYQDVLSGELGVMDSTAIALCKDNNIPIVVFNLFEPGNIGRAVAGEPIGSRIGDPA.

An ATP-binding site is contributed by 9-12 (KLSG). The segment at 17 to 22 (GSQGYG) is involved in allosteric activation by GTP. Gly51 serves as a coordination point for UMP. Residues Gly52 and Arg56 each coordinate ATP. UMP is bound by residues Asp71 and 132-139 (CGNPFFTT). The ATP site is built by Thr159, Tyr165, and Asp168.

It belongs to the UMP kinase family. In terms of assembly, homohexamer.

It is found in the cytoplasm. It catalyses the reaction UMP + ATP = UDP + ADP. Its pathway is pyrimidine metabolism; CTP biosynthesis via de novo pathway; UDP from UMP (UMPK route): step 1/1. Its activity is regulated as follows. Allosterically activated by GTP. Inhibited by UTP. In terms of biological role, catalyzes the reversible phosphorylation of UMP to UDP. The sequence is that of Uridylate kinase from Synechococcus sp. (strain CC9605).